Here is a 1551-residue protein sequence, read N- to C-terminus: UDP-glucose:glycoprotein glucosyltransferase 1 (1551 aa).

The signal sequence occupies residues Met-1 to Ala-42. N-linked (GlcNAc...) asparagine glycans are attached at residues Asn-269, Asn-536, Asn-1015, and Asn-1228. The segment at Lys-1244–Leu-1551 is glucosyltransferase. Ser-1277 is modified (phosphoserine). Residues Lys-1531–Leu-1551 form a disordered region. A Prevents secretion from ER motif is present at residues His-1548–Leu-1551.

The protein belongs to the glycosyltransferase 8 family. As to quaternary structure, monomer as well as in a tight complex with SELENOF. Interacts with METTL23. Part of a large chaperone multiprotein complex comprising DNAJB11, HSP90B1, HSPA5, HYOU, PDIA2, PDIA4, PDIA6, PPIB, SDF2L1, UGGT1 and very small amounts of ERP29, but not, or at very low levels, CALR nor CANX. Requires Ca(2+) as cofactor.

The protein localises to the endoplasmic reticulum lumen. It localises to the endoplasmic reticulum-Golgi intermediate compartment. It carries out the reaction N(4)-(alpha-D-Man-(1-&gt;2)-alpha-D-Man-(1-&gt;2)-alpha-D-Man-(1-&gt;3)-[alpha-D-Man-(1-&gt;2)-alpha-D-Man-(1-&gt;3)-[alpha-D-Man-(1-&gt;2)-alpha-D-Man-(1-&gt;6)]-alpha-D-Man-(1-&gt;6)]-beta-D-Man-(1-&gt;4)-beta-D-GlcNAc-(1-&gt;4)-beta-D-GlcNAc)-L-asparaginyl-[protein] (N-glucan mannose isomer 9A1,2,3B1,2,3) + UDP-alpha-D-glucose = N(4)-(alpha-D-Glc-(1-&gt;3)-alpha-D-Man-(1-&gt;2)-alpha-D-Man-(1-&gt;2)-alpha-D-Man-(1-&gt;3)-[alpha-D-Man-(1-&gt;2)-alpha-D-Man-(1-&gt;3)-[alpha-D-Man-(1-&gt;2)-alpha-D-Man-(1-&gt;6)]-alpha-D-Man-(1-&gt;6)]-beta-D-Man-(1-&gt;4)-beta-D-GlcNAc-(1-&gt;4)-beta-D-GlcNAc)-L-asparaginyl-[protein] + UDP + H(+). The protein operates within protein modification; protein glycosylation. In terms of biological role, recognizes glycoproteins with minor folding defects. Reglucosylates single N-glycans near the misfolded part of the protein, thus providing quality control for protein folding in the endoplasmic reticulum. Reglucosylated proteins are recognized by calreticulin for recycling to the endoplasmic reticulum and refolding or degradation. This chain is UDP-glucose:glycoprotein glucosyltransferase 1 (Uggt1), found in Rattus norvegicus (Rat).